We begin with the raw amino-acid sequence, 1723 residues long: Lys-gingipain (1723 aa).

The N-terminal stretch at 1 to 24 (MRKLLLLIAASLLGVGLYAQSAKI) is a signal peptide. Positions 25-228 (KLDAPTTRTT…ETAYKQLFNR (204 aa)) are excised as a propeptide. D313, D337, D339, F341, and E343 together coordinate Ca(2+). The active-site Proton donor is H444. The active-site Nucleophile is C477. 2 residues coordinate Ca(2+): F482 and E491. Residues 964–985 (WDAPNGTPNPNPNPNPGTTTLS) are disordered. The Ca(2+) site is built by S987, E989, D1000, D1002, D1004, H1006, S1021, G1023, N1042, D1145, E1146, D1430, E1432, D1444, D1446, D1448, N1450, S1480, N1495, and D1585.

The protein belongs to the peptidase C25 family. Post-translationally, proteolytically cleaved into a catalytic subunit and three adhesins. Arg-gingipain is involved in this post-translational processing.

It localises to the secreted. It carries out the reaction Endopeptidase with strict specificity for lysyl bonds.. Activated by the thiol-reducing agents cysteine, 2-mercaptoethanol and dithiothreitol. Inhibited by iodacetamide, iodoacetic acid, leupeptin, tosyl-L-lysine and tosyl-L-phenylalanine. Not inhibited by elastatinal, chymostatin, cystatins, alpha1-antichymotrypsin or the serine protease inhibitors phenylmethylsulfonyl fluoride and diisopropylfluorophosphate. Not inhibited by metal ion chelators. Inhibited by the heavy metal ions Fe(3+), Zn(2+), Cu(2+) and Mn(2+). In terms of biological role, cysteine proteinase with a strong preference for substrates with Lys in the P1 position. Hydrolyzes bovine hemoglobin, bovine serum albumin, casein, human placental type I collagen and human IgA and IgG. Disrupts the functions of polymorphonuclear leukocytes. May act as a virulence factor in the development of peridontal disease. Involved in the coaggregation of P.gingivalis with other oral bacteria. In Porphyromonas gingivalis (strain ATCC 33277 / DSM 20709 / CIP 103683 / JCM 12257 / NCTC 11834 / 2561), this protein is Lys-gingipain.